Here is a 930-residue protein sequence, read N- to C-terminus: MDFTQLDDFAFAYYGLPDQSSLVSLVDQTHTFQSPTAFPQHQAMSGLAHSGLPFGTLPTGNRSQSMEGSKAPPDRTSPASNALEDSTTDEFGLASRNRADGTDLGVKPKEDKADATAAWSGLRTKAGKERRRLPLACIACRRKKIRCSGEKPACEHCLCSYIPCVYKVTTRKAGPRTDYMAMLDKRPKRMEERVIKAISKLDEEVASSVTCPVVKSAIPGTVPSSKPTKKRSAEEAFGPDLETWAKVPSEPKIEGDDGSSSLQVQGKEGNKLQQEGTEALPSQEIQEHLAELFFDNICGQSYHLLHKPSYMRKLKNGTLPPVLVLTVCAVAARFTSSPLVNSSRPEFLRGEEWASHARDICTRRYECPNLTILTCLLILGLHEFGTCQGGRSWALSGQAIRMAFALQLHKDLEYDPSGRNGTKTQLSFIDREIRRRIMWACFLMDRFNSFETDRPMFIREDTIELPLPVKEKYFQFDMPAPTEMLDGRVPHPPSPKDGQIADTRENMGVAAFLIRAIALWGRIITYLSQGCKDLDPNPLWEDKSHYMKHLNDIVNLEASLPLSLKYSAENLEVHKTEKTPSQFLLMHLCLQHNILFVSRAAMSARKQHGVHVDFFSEASKRTFNAANRISELLREAEQSGCFVSAPFAGYCAFSSTTVHILGIMSRNPSMKLTAQANLTTNVKYLHKMKKYWGMFHWMVENVRTQYRNVLDAMRAGANVEERATQPSFLQYGDWFNRYPRGLFDAEFMDPATHKRKDSGADGVLEAKPELRSVEEYFTLPTPRRVENKDTIRAAAPKRKQSAKKQTGMPAQPGQHLDSLQIIEPDAVSQEHKFSGGLGLQITGVAGFNPLAASKTQIPDFSTTMSPMSPANMTPFAQHAHTHTFFPPELLAMNFGQGSNGNTDPLDRQLIYGGYLMDASTGLGDGYTWAL.

The segment at residues 137–164 (CIACRRKKIRCSGEKPACEHCLCSYIPC) is a DNA-binding region (zn(2)-C6 fungal-type).

It localises to the nucleus. In terms of biological role, zn(2)-C6 fungal-type transcription factor that has a role in the establishment of the fungus within the plant and/or the progress of the disease. Regulates the expression of virulence factors such as SIX1 and SIX6. The protein is Zn(2)-C6 fungal-type transcription factor FTF1c of Fusarium oxysporum f. sp. lycopersici (strain 4287 / CBS 123668 / FGSC 9935 / NRRL 34936) (Fusarium vascular wilt of tomato).